A 252-amino-acid chain; its full sequence is Carbohydrate deacetylase (252 aa).

Residues histidine 59 and histidine 122 each contribute to the Mg(2+) site.

Belongs to the YdjC deacetylase family. As to quaternary structure, homodimer. Mg(2+) is required as a cofactor.

Probably catalyzes the deacetylation of acetylated carbohydrates an important step in the degradation of oligosaccharides. This Vibrio vulnificus (strain YJ016) protein is Carbohydrate deacetylase.